The following is a 324-amino-acid chain: Beta-ketoacyl-[acyl-carrier-protein] synthase III (324 aa).

Catalysis depends on residues Cys-112 and His-249. An ACP-binding region spans residues 250 to 254 (QANRR). Residue Asn-279 is part of the active site.

Belongs to the thiolase-like superfamily. FabH family. As to quaternary structure, homodimer.

It localises to the cytoplasm. The catalysed reaction is malonyl-[ACP] + acetyl-CoA + H(+) = 3-oxobutanoyl-[ACP] + CO2 + CoA. Its pathway is lipid metabolism; fatty acid biosynthesis. In terms of biological role, catalyzes the condensation reaction of fatty acid synthesis by the addition to an acyl acceptor of two carbons from malonyl-ACP. Catalyzes the first condensation reaction which initiates fatty acid synthesis and may therefore play a role in governing the total rate of fatty acid production. Possesses both acetoacetyl-ACP synthase and acetyl transacylase activities. Its substrate specificity determines the biosynthesis of branched-chain and/or straight-chain of fatty acids. This Streptococcus pyogenes serotype M3 (strain ATCC BAA-595 / MGAS315) protein is Beta-ketoacyl-[acyl-carrier-protein] synthase III.